Reading from the N-terminus, the 168-residue chain is GTP-dependent dephospho-CoA kinase (168 aa).

Asp-40, Val-41, Val-42, Asp-59, and Glu-112 together coordinate GTP.

This sequence belongs to the GTP-dependent DPCK family.

It carries out the reaction 3'-dephospho-CoA + GTP = GDP + CoA + H(+). It functions in the pathway cofactor biosynthesis; coenzyme A biosynthesis. In terms of biological role, catalyzes the GTP-dependent phosphorylation of the 3'-hydroxyl group of dephosphocoenzyme A to form coenzyme A (CoA). The polypeptide is GTP-dependent dephospho-CoA kinase (Methanoregula boonei (strain DSM 21154 / JCM 14090 / 6A8)).